Here is a 1060-residue protein sequence, read N- to C-terminus: Carbamoyl phosphate synthase large chain (1060 aa).

The interval 1–401 is carboxyphosphate synthetic domain; that stretch reads MPKRTDIRKI…SLLKACRSLE (401 aa). ATP-binding residues include R129, R169, G175, G176, R208, I210, E215, G241, I242, H243, Q284, and E298. The ATP-grasp 1 domain maps to 133-327; that stretch reads KQLMEELNQP…IAKLAAKIAV (195 aa). The Mg(2+) site is built by Q284, E298, and N300. Residues Q284, E298, and N300 each contribute to the Mn(2+) site. The tract at residues 402–546 is oligomerization domain; the sequence is IGVDHIKIAD…YSTYAVENES (145 aa). The tract at residues 547 to 929 is carbamoyl phosphate synthetic domain; that stretch reads LISDKASILV…ALYKAFEAAY (383 aa). Positions 671–861 constitute an ATP-grasp 2 domain; that stretch reads EATLQALNIP…MAQVATKVIL (191 aa). Positions 707, 746, 748, 752, 777, 778, 779, 780, 820, and 832 each coordinate ATP. Mg(2+) contacts are provided by Q820, E832, and N834. Residues Q820, E832, and N834 each contribute to the Mn(2+) site. An MGS-like domain is found at 930-1060; it reads LHMPDYGNIV…SRAFTLKVLD (131 aa). An allosteric domain region spans residues 930–1060; it reads LHMPDYGNIV…SRAFTLKVLD (131 aa).

It belongs to the CarB family. Composed of two chains; the small (or glutamine) chain promotes the hydrolysis of glutamine to ammonia, which is used by the large (or ammonia) chain to synthesize carbamoyl phosphate. Tetramer of heterodimers (alpha,beta)4. Mg(2+) serves as cofactor. It depends on Mn(2+) as a cofactor.

The catalysed reaction is hydrogencarbonate + L-glutamine + 2 ATP + H2O = carbamoyl phosphate + L-glutamate + 2 ADP + phosphate + 2 H(+). The enzyme catalyses hydrogencarbonate + NH4(+) + 2 ATP = carbamoyl phosphate + 2 ADP + phosphate + 2 H(+). It functions in the pathway amino-acid biosynthesis; L-arginine biosynthesis; carbamoyl phosphate from bicarbonate: step 1/1. The protein operates within pyrimidine metabolism; UMP biosynthesis via de novo pathway; (S)-dihydroorotate from bicarbonate: step 1/3. Large subunit of the glutamine-dependent carbamoyl phosphate synthetase (CPSase). CPSase catalyzes the formation of carbamoyl phosphate from the ammonia moiety of glutamine, carbonate, and phosphate donated by ATP, constituting the first step of 2 biosynthetic pathways, one leading to arginine and/or urea and the other to pyrimidine nucleotides. The large subunit (synthetase) binds the substrates ammonia (free or transferred from glutamine from the small subunit), hydrogencarbonate and ATP and carries out an ATP-coupled ligase reaction, activating hydrogencarbonate by forming carboxy phosphate which reacts with ammonia to form carbamoyl phosphate. The polypeptide is Carbamoyl phosphate synthase large chain (Streptococcus agalactiae serotype III (strain NEM316)).